A 495-amino-acid chain; its full sequence is Formin-like protein 17 (495 aa).

Positions 1–92 (MDIRELIDIT…HNLKGQGQTR (92 aa)) are disordered. A compositionally biased stretch (pro residues) spans 19–29 (GPPPPPPPPLL). The segment covering 30 to 39 (QPHHSALSSS) has biased composition (low complexity). An FH2 domain is found at 86–486 (KGQGQTRKAN…RAQKEAENEK (401 aa)).

It belongs to the formin-like family. Class-II subfamily.

The protein is Formin-like protein 17 (FH17) of Arabidopsis thaliana (Mouse-ear cress).